Here is a 423-residue protein sequence, read N- to C-terminus: Serine--tRNA ligase (423 aa).

Residue 231 to 233 (TGE) coordinates L-serine. An ATP-binding site is contributed by 262-264 (RQE). E285 contacts L-serine. 349–352 (EISS) is a binding site for ATP. L-serine is bound at residue S385.

The protein belongs to the class-II aminoacyl-tRNA synthetase family. Type-1 seryl-tRNA synthetase subfamily. In terms of assembly, homodimer. The tRNA molecule binds across the dimer.

The protein localises to the cytoplasm. It catalyses the reaction tRNA(Ser) + L-serine + ATP = L-seryl-tRNA(Ser) + AMP + diphosphate + H(+). The enzyme catalyses tRNA(Sec) + L-serine + ATP = L-seryl-tRNA(Sec) + AMP + diphosphate + H(+). It functions in the pathway aminoacyl-tRNA biosynthesis; selenocysteinyl-tRNA(Sec) biosynthesis; L-seryl-tRNA(Sec) from L-serine and tRNA(Sec): step 1/1. Its function is as follows. Catalyzes the attachment of serine to tRNA(Ser). Is also able to aminoacylate tRNA(Sec) with serine, to form the misacylated tRNA L-seryl-tRNA(Sec), which will be further converted into selenocysteinyl-tRNA(Sec). This is Serine--tRNA ligase from Phytoplasma mali (strain AT).